Here is a 1148-residue protein sequence, read N- to C-terminus: Phospholipid-transporting ATPase IB (1148 aa).

Topologically, residues 1 to 44 (MSRATSVGDQLEAPARIIYLNQSHLNKFCDNRISTAKYSVLTFL) are cytoplasmic. Position 5 is a phosphothreonine (Thr-5). A helical membrane pass occupies residues 45–66 (PRFLYEQIRRAANAFFLFIALL). Residues 67–71 (QQIPD) lie on the Exoplasmic loop side of the membrane. The chain crosses the membrane as a helical span at residues 72–94 (VSPTGRYTTLVPLVIILTIAGIK). At 95-276 (EIIEDFKRHK…SNVEKVTNVQ (182 aa)) the chain is on the cytoplasmic side. A helical membrane pass occupies residues 277–298 (ILVLFGILLVMALVSSVGALFW). Residues 299-323 (NGSHGGKSWYIKKMDTNSDNFGYNL) are Exoplasmic loop-facing. A helical membrane pass occupies residues 324–345 (LTFIILYNNLIPISLLVTLEVV). Topologically, residues 346-837 (KYTQALFINW…GAWSYNRVTK (492 aa)) are cytoplasmic. Asp-388 serves as the catalytic 4-aspartylphosphate intermediate. 12 residues coordinate ATP: Asp-388, Lys-389, Thr-390, Glu-488, Phe-529, Lys-552, Arg-585, Thr-665, Gly-666, Asp-667, Arg-755, and Lys-761. Asp-388 serves as a coordination point for Mg(2+). Residue Thr-390 coordinates Mg(2+). Asp-781 serves as a coordination point for Mg(2+). ATP is bound by residues Asn-784 and Asp-785. Asp-785 is a Mg(2+) binding site. A helical membrane pass occupies residues 838 to 858 (CILYCFYKNVVLYIIELWFAF). Residues 859 to 870 (VNGFSGQILFER) lie on the Exoplasmic loop side of the membrane. The helical transmembrane segment at 871 to 890 (WCIGLYNVIFTALPPFTLGI) threads the bilayer. At 891–920 (FERSCTQESMLRFPQLYRITQNAEGFNTKV) the chain is on the cytoplasmic side. Residues 921–942 (FWGHCINALVHSLILFWVPMKA) form a helical membrane-spanning segment. Residues 943–956 (LEHDTPVTSGHATD) lie on the Exoplasmic loop side of the membrane. The helical transmembrane segment at 957 to 979 (YLFVGNIVYTYVVVTVCLKAGLE) threads the bilayer. The Cytoplasmic segment spans residues 980–985 (TTAWTK). Residues 986-1006 (FSHLAVWGSMLIWLVFFGVYS) form a helical membrane-spanning segment. At 1007-1024 (TIWPTIPIAPDMKGQATM) the chain is on the exoplasmic loop side. The helical transmembrane segment at 1025-1049 (VLSSAYFWLGLFLVPTACLIEDVAW) threads the bilayer. Residues 1050 to 1148 (RAAKHTCKKT…DTTKENSRKK (99 aa)) lie on the Cytoplasmic side of the membrane.

This sequence belongs to the cation transport ATPase (P-type) (TC 3.A.3) family. Type IV subfamily. Component of a P4-ATPase flippase complex which consists of a catalytic alpha subunit and an accessory beta subunit. Interacts with TMEM30A to form a flippase complex. Mg(2+) is required as a cofactor. In terms of tissue distribution, found in testis, heart and brain. Most abundant in testis. Also detected in fetal tissues. Expressed in retinal photoreceptor cells; detected in retina outer nuclear layer and inner segment (at protein level).

Its subcellular location is the membrane. It is found in the golgi apparatus membrane. It localises to the endosome membrane. The protein resides in the cell membrane. The protein localises to the photoreceptor outer segment membrane. Its subcellular location is the photoreceptor inner segment membrane. It catalyses the reaction ATP + H2O + phospholipidSide 1 = ADP + phosphate + phospholipidSide 2.. The catalysed reaction is a 1,2-diacyl-sn-glycero-3-phospho-L-serine(out) + ATP + H2O = a 1,2-diacyl-sn-glycero-3-phospho-L-serine(in) + ADP + phosphate + H(+). The enzyme catalyses a 1,2-diacyl-sn-glycero-3-phosphoethanolamine(in) + ATP + H2O = a 1,2-diacyl-sn-glycero-3-phosphoethanolamine(out) + ADP + phosphate + H(+). Functionally, catalytic component of a P4-ATPase flippase complex which catalyzes the hydrolysis of ATP coupled to the transport of aminophospholipids from the outer to the inner leaflet of various membranes and ensures the maintenance of asymmetric distribution of phospholipids. Able to translocate phosphatidylserine, but not phosphatidylcholine. Phospholipid translocation also seems to be implicated in vesicle formation and in uptake of lipid signaling molecules. Reconstituted to liposomes, the ATP8A2:TMEM30A flippase complex predominantly transports phosphatidylserine (PS) and to a lesser extent phosphatidylethanolamine (PE). Phospholipid translocation is not associated with a countertransport of an inorganic ion or other charged substrate from the cytoplasmic side toward the exoplasm in connection with the phosphorylation from ATP. ATP8A2:TMEM30A may be involved in regulation of neurite outgrowth. Proposed to function in the generation and maintenance of phospholipid asymmetry in photoreceptor disk membranes and neuronal axon membranes. May be involved in vesicle trafficking in neuronal cells. Required for normal visual and auditory function; involved in photoreceptor and inner ear spiral ganglion cell survival. The protein is Phospholipid-transporting ATPase IB of Mus musculus (Mouse).